The sequence spans 407 residues: RNA-binding motif, single-stranded-interacting protein 2 (407 aa).

Methionine 1 is subject to N-acetylmethionine. The segment at 29–54 (QQMAPPSPSNSTPNSSSGSNGNDQLS) is disordered. Residues 37-50 (SNSTPNSSSGSNGN) are compositionally biased toward low complexity. 2 consecutive RRM domains span residues 56–129 (TNLY…MAKQ) and 135–220 (TNLY…FADG). Serine 106 is modified (phosphoserine). Threonine 269 is subject to Phosphothreonine. Phosphoserine is present on residues serine 280 and serine 285.

The protein resides in the nucleus. In Homo sapiens (Human), this protein is RNA-binding motif, single-stranded-interacting protein 2 (RBMS2).